Consider the following 517-residue polypeptide: ATP synthase subunit alpha 1 (517 aa).

G176–T183 provides a ligand contact to ATP.

Belongs to the ATPase alpha/beta chains family. As to quaternary structure, F-type ATPases have 2 components, CF(1) - the catalytic core - and CF(0) - the membrane proton channel. CF(1) has five subunits: alpha(3), beta(3), gamma(1), delta(1), epsilon(1). CF(0) has three main subunits: a(1), b(2) and c(9-12). The alpha and beta chains form an alternating ring which encloses part of the gamma chain. CF(1) is attached to CF(0) by a central stalk formed by the gamma and epsilon chains, while a peripheral stalk is formed by the delta and b chains.

Its subcellular location is the cell inner membrane. The enzyme catalyses ATP + H2O + 4 H(+)(in) = ADP + phosphate + 5 H(+)(out). Its function is as follows. Produces ATP from ADP in the presence of a proton gradient across the membrane. The alpha chain is a regulatory subunit. This Shewanella frigidimarina (strain NCIMB 400) protein is ATP synthase subunit alpha 1.